The chain runs to 115 residues: Putative membrane protein insertion efficiency factor (115 aa).

The protein belongs to the UPF0161 family.

Its subcellular location is the cell membrane. Could be involved in insertion of integral membrane proteins into the membrane. This Mycobacterium avium (strain 104) protein is Putative membrane protein insertion efficiency factor.